Consider the following 1181-residue polypeptide: Cellulose synthase-like protein D5 (1181 aa).

The segment covering 1-17 has biased composition (polar residues); the sequence is MVKSAASQSPSPVTITV. Disordered regions lie at residues 1-70 and 202-229; these read MVKS…DEGR and KEPY…LPQM. Positions 48 to 59 are enriched in low complexity; the sequence is SSRATRRTSISS. The span at 210 to 222 shows a compositional bias: acidic residues; sequence DDPETEEEDEEDE. Transmembrane regions (helical) follow at residues 312 to 332 and 343 to 363; these read AIIS…GLFL and AMWL…SWLL. Aspartate 443 is an active-site residue. A coiled-coil region spans residues 497-542; that stretch reads VRERRRVKREYDEFKVRINSLPEAIRRRSDAYNVHEELRAKKKQME. Residue aspartate 884 is part of the active site. Transmembrane regions (helical) follow at residues 966–986, 991–1011, 1038–1058, 1082–1102, 1116–1136, and 1146–1166; these read LFLI…QFIV, ITFL…SLLE, PAAV…SFTL, FLMV…AVGL, LVGG…FAKG, and TIVF…WVYI.

This sequence belongs to the glycosyltransferase 2 family. Plant cellulose synthase-like D subfamily. Expressed in vascular tissues.

Its subcellular location is the golgi apparatus membrane. In terms of biological role, involved in stem and root growth. Possesses xylan and homogalacturonan synthase activity. The protein is Cellulose synthase-like protein D5 (CSLD5) of Arabidopsis thaliana (Mouse-ear cress).